Consider the following 226-residue polypeptide: Lysoplasmalogenase TMEM86B (226 aa).

Over Met-1 to Arg-23 the chain is Cytoplasmic. Residues Trp-24–Ile-40 form a helical membrane-spanning segment. Residues Pro-41–Ser-46 lie on the Extracellular side of the membrane. Residues Trp-47–Ala-68 traverse the membrane as a helical segment. At Pro-69–Thr-74 the chain is on the cytoplasmic side. The helical transmembrane segment at Trp-75 to Trp-93 threads the bilayer. Over Pro-94–Tyr-99 the chain is Extracellular. A helical transmembrane segment spans residues Gly-100 to Leu-117. Over Thr-118–Gly-123 the chain is Cytoplasmic. A helical transmembrane segment spans residues Leu-124–Leu-140. Topologically, residues Leu-141–Gly-146 are extracellular. A helical transmembrane segment spans residues Met-147–Trp-163. Topologically, residues Arg-164–Ser-171 are cytoplasmic. The helical transmembrane segment at Ala-172–Trp-188 threads the bilayer. Topologically, residues Asp-189–Arg-199 are extracellular. The chain crosses the membrane as a helical span at residues Leu-200–Leu-218. The Cytoplasmic portion of the chain corresponds to Arg-219–His-226.

The protein belongs to the TMEM86 family. In terms of assembly, homodimer. Enriched in liver. Also detected in brain and testis.

The protein localises to the endoplasmic reticulum membrane. Its subcellular location is the cytoplasm. It carries out the reaction a 1-O-(1Z-alkenyl)-sn-glycero-3-phosphocholine + H2O = a 2,3-saturated aldehyde + sn-glycerol 3-phosphocholine. It catalyses the reaction a 1-O-(1Z-alkenyl)-sn-glycero-3-phosphoethanolamine + H2O = a 2,3-saturated aldehyde + sn-glycero-3-phosphoethanolamine. Competitively inhibited by lysophosphatidic acid. Functionally, catalyzes the hydrolysis of the vinyl ether bond of choline or ethanolamine lysoplasmalogens, forming fatty aldehyde and glycerophosphocholine or glycerophosphoethanolamine, respectively and is specific for the sn-2-deacylated (lyso) form of plasmalogen. In Mus musculus (Mouse), this protein is Lysoplasmalogenase TMEM86B (Tmem86b).